Reading from the N-terminus, the 323-residue chain is Tetraacyldisaccharide 4'-kinase (323 aa).

56–63 (TVGGVGKT) provides a ligand contact to ATP.

This sequence belongs to the LpxK family.

The enzyme catalyses a lipid A disaccharide + ATP = a lipid IVA + ADP + H(+). The protein operates within glycolipid biosynthesis; lipid IV(A) biosynthesis; lipid IV(A) from (3R)-3-hydroxytetradecanoyl-[acyl-carrier-protein] and UDP-N-acetyl-alpha-D-glucosamine: step 6/6. Functionally, transfers the gamma-phosphate of ATP to the 4'-position of a tetraacyldisaccharide 1-phosphate intermediate (termed DS-1-P) to form tetraacyldisaccharide 1,4'-bis-phosphate (lipid IVA). The protein is Tetraacyldisaccharide 4'-kinase of Legionella pneumophila (strain Lens).